Here is a 66-residue protein sequence, read N- to C-terminus: Large ribosomal subunit protein uL29 (66 aa).

It belongs to the universal ribosomal protein uL29 family.

The protein is Large ribosomal subunit protein uL29 of Geobacillus kaustophilus (strain HTA426).